The primary structure comprises 418 residues: Metacaspase-2 (418 aa).

The tract at residues 68–113 (PSPYTHAPHAPSPFNHAPPDSYPFTHAPPASSPFNHAPPGPPPPVH) is disordered. Residues 70-80 (PYTHAPHAPSP) show a composition bias toward low complexity. The segment covering 103 to 112 (HAPPGPPPPV) has biased composition (pro residues). Residues histidine 200 and cysteine 256 contribute to the active site. Residues 385–406 (PDEEEEVNQAPQKTQEPQLSAN) form a disordered region. The segment covering 393 to 405 (QAPQKTQEPQLSA) has biased composition (polar residues).

This sequence belongs to the peptidase C14B family.

Functionally, acts as a negative regulator of oxidative stress cell death and hypersensitive cell death response mediated by immune response. Acts via indirect or direct regulation of AMC1 at postranscriptional level. This is Metacaspase-2 (AMC2) from Arabidopsis thaliana (Mouse-ear cress).